We begin with the raw amino-acid sequence, 324 residues long: MSFLRFVGAILFLVAIFGASNAQLSATFYDTTCPNVTSIVRGVMDQRQRTDARAGAKIIRLHFHDCFVNGCDGSILLDTDGTQTEKDAPANVGAGGFDIVDDIKTALENVCPGVVSCADILALASEIGVVLAKGPSWQVLFGRKDSLTANRSGANSDIPSPFETLAVMIPQFTNKGMDLTDLVALSGAHTFGRARCGTFEQRLFNFNGSGNPDLTVDATFLQTLQGICPQGGNNGNTFTNLDISTPNDFDNDYFTNLQSNQGLLQTDQELFSTSGSATIAIVNRYAGSQTQFFDDFVSSMIKLGNISPLTGTNGQIRTDCKRVN.

Residues 1-22 (MSFLRFVGAILFLVAIFGASNA) form the signal peptide. Gln23 bears the Pyrrolidone carboxylic acid mark. Cystine bridges form between Cys33/Cys111, Cys66/Cys71, Cys117/Cys320, and Cys196/Cys228. N-linked (GlcNAc...) asparagine glycosylation is present at Asn35. The Proton acceptor role is filled by His64. Asp65, Val68, Gly70, Asp72, and Ser74 together coordinate Ca(2+). The N-linked (GlcNAc...) asparagine glycan is linked to Asn150. Pro159 provides a ligand contact to substrate. His189 contributes to the heme b binding site. Ca(2+) is bound at residue Thr190. A glycan (N-linked (GlcNAc...) asparagine) is linked at Asn207. Ca(2+)-binding residues include Asp242, Thr245, and Asp250.

It belongs to the peroxidase family. Classical plant (class III) peroxidase subfamily. Ca(2+) serves as cofactor. The cofactor is heme b.

It is found in the secreted. The enzyme catalyses 2 a phenolic donor + H2O2 = 2 a phenolic radical donor + 2 H2O. Removal of H(2)O(2), oxidation of toxic reductants, biosynthesis and degradation of lignin, suberization, auxin catabolism, response to environmental stresses such as wounding, pathogen attack and oxidative stress. These functions might be dependent on each isozyme/isoform in each plant tissue. Functionally, plays an integral role in secondary cell wall biosynthesis by the polymerization of cinnamyl alcohols into lignin and by forming rigid cross-links between cellulose, pectin, hydroxy-proline-rich glycoproteins, and lignin. The polypeptide is Lignin-forming anionic peroxidase (Nicotiana tabacum (Common tobacco)).